The primary structure comprises 253 residues: uncharacterized protein (253 aa).

A signal peptide spans 1 to 19 (MRYLKRITIYISLLILVSG). C20 is lipidated: N-palmitoyl cysteine. The S-diacylglycerol cysteine moiety is linked to residue C20.

It belongs to the staphylococcal tandem lipoprotein family.

The protein resides in the cell membrane. This is an uncharacterized protein from Staphylococcus epidermidis (strain ATCC 12228 / FDA PCI 1200).